The sequence spans 557 residues: Trigger factor (557 aa).

The PPIase FKBP-type domain occupies 169 to 255; it reads GDVVVIDFQA…LKEIKTKELP (87 aa). A disordered region spans residues 438–557; the sequence is WVDSEGNPTE…KAGKKSKKDK (120 aa). Basic and acidic residues predominate over residues 455 to 466; it reads SEGEDRQERSES.

Belongs to the FKBP-type PPIase family. Tig subfamily.

It is found in the cytoplasm. The enzyme catalyses [protein]-peptidylproline (omega=180) = [protein]-peptidylproline (omega=0). In terms of biological role, involved in protein export. Acts as a chaperone by maintaining the newly synthesized protein in an open conformation. Functions as a peptidyl-prolyl cis-trans isomerase. This is Trigger factor from Synechococcus sp. (strain JA-3-3Ab) (Cyanobacteria bacterium Yellowstone A-Prime).